We begin with the raw amino-acid sequence, 263 residues long: uncharacterized protein (263 aa).

Residues I22–L44 form a disordered region. The span at S34–S43 shows a compositional bias: low complexity.

The protein localises to the mitochondrion. This is an uncharacterized protein from Schizosaccharomyces pombe (strain 972 / ATCC 24843) (Fission yeast).